A 201-amino-acid polypeptide reads, in one-letter code: Putative ferritin heavy polypeptide-like 19 (201 aa).

The region spanning 1 to 123 (MAFYFDQDDA…GYLSNLHKMG (123 aa)) is the Ferritin-like diiron domain.

Belongs to the ferritin family.

This chain is Putative ferritin heavy polypeptide-like 19 (FTH1P19), found in Homo sapiens (Human).